The following is a 294-amino-acid chain: Acetylglutamate kinase (294 aa).

Substrate-binding positions include 66–67 (GG), Arg88, and Asn193.

Belongs to the acetylglutamate kinase family. ArgB subfamily.

The protein localises to the cytoplasm. The enzyme catalyses N-acetyl-L-glutamate + ATP = N-acetyl-L-glutamyl 5-phosphate + ADP. It participates in amino-acid biosynthesis; L-arginine biosynthesis; N(2)-acetyl-L-ornithine from L-glutamate: step 2/4. Functionally, catalyzes the ATP-dependent phosphorylation of N-acetyl-L-glutamate. This is Acetylglutamate kinase from Agrobacterium fabrum (strain C58 / ATCC 33970) (Agrobacterium tumefaciens (strain C58)).